Consider the following 427-residue polypeptide: Ceramide Synthase FUM18 (427 aa).

A glycan (N-linked (GlcNAc...) asparagine) is linked at Asn20. 6 helical membrane-spanning segments follow: residues 38 to 58 (ILPLLTGFTLLAGVILLIHIS), 131 to 151 (EQGWILMYYSVFWPLGMLIWA), 173 to 193 (GLIKFYILTQLAYWIQQVISV), 202 to 222 (YWLNVVHHFITITLILLCYVY), 250 to 270 (YLGFTTLCDLVFFLFFVTWIV), and 335 to 355 (VSILAYLLLLQVLMMIWFGFI). The TLC domain occupies 124 to 364 (RKVVRFSEQG…ICKVAIGVLD (241 aa)). Residues 373-406 (SDVESDEEDSEPVANGSGWQQSQLQPGRRVGSNG) are disordered. Asn387 carries an N-linked (GlcNAc...) asparagine glycan.

The protein belongs to the sphingosine N-acyltransferase family.

The protein localises to the endoplasmic reticulum membrane. The protein operates within mycotoxin biosynthesis. Ceramide synthase; part of the gene cluster that mediates the biosynthesis of fumonisins B1 (FB1), B2 (FB2), B3 (FB3), and B4 (FB4), which are carcinogenic mycotoxins. Plays a role in self-protection from FB1 toxicity by contributing to ceramide synthesis. The biosynthesis starts with the FUM1-catalyzed carbon chain assembly from one molecule of acetyl-CoA, eight molecules of malonyl-CoA, and two molecules of methionine (in S-adenosyl form). The C18 polyketide chain is released from the enzyme by a nucleophilic attack of a carbanion, which is derived from R-carbon of alanine by decarboxylation, on the carbonyl carbon of polyketide acyl chain. This step is catalyzed by the pyridoxal 5'-phosphate-dependent aminoacyl transferase FUM8. The resultant 3-keto intermediate is then stereospecifically reduced to a 3-hydroxyl product by reductase FUM13. Subsequent oxidations at C-10 by the cytochrome P450 monooxygenase FUM2, C-14 and C-15 by FUM6, FUM12 or FUM15, tricarballylic esterification of the hydroxyl groups on C-14 and C-15 by acyltransferase FUM14, and C-5 hydroxylation by 2-keto-glutarate-dependent dioxygenase FUM3 furnish the biosynthesis of fumonisins. The tricarballylic moieties are most likely derived from the citric acid cycle, and their addition to the carbon backbone may involve FUM7, FUM10, FUM11 and FUM14. The polypeptide is Ceramide Synthase FUM18 (Gibberella moniliformis (strain M3125 / FGSC 7600) (Maize ear and stalk rot fungus)).